The primary structure comprises 203 residues: Ras-related protein RABD2a (203 aa).

Residues 15 to 23 (GDSGVGKSC), 33 to 40 (YVESYIST), 63 to 67 (DTAGQ), 121 to 124 (NKSD), and 151 to 153 (SAK) contribute to the GTP site. Positions 37-45 (YISTIGVDF) match the Effector region motif. The interval 176-203 (QPAGNNARPPTVQIRGQPVAQKNGCCST) is disordered. Residues Cys-200 and Cys-201 are each lipidated (S-geranylgeranyl cysteine).

The protein belongs to the small GTPase superfamily. Rab family. As to quaternary structure, does not interact with GC5.

Its subcellular location is the golgi apparatus. It is found in the trans-Golgi network membrane. The protein resides in the golgi apparatus membrane. In terms of biological role, protein transport. Regulator of membrane traffic from the Golgi apparatus towards the endoplasmic reticulum (ER). The chain is Ras-related protein RABD2a (RABD2A) from Arabidopsis thaliana (Mouse-ear cress).